Here is a 148-residue protein sequence, read N- to C-terminus: Large ribosomal subunit protein uL15 (148 aa).

Residues 1–61 (MKINDLKPAP…GGQMPLQRRV (61 aa)) are disordered.

The protein belongs to the universal ribosomal protein uL15 family. In terms of assembly, part of the 50S ribosomal subunit.

Functionally, binds to the 23S rRNA. The sequence is that of Large ribosomal subunit protein uL15 from Thermodesulfovibrio yellowstonii (strain ATCC 51303 / DSM 11347 / YP87).